We begin with the raw amino-acid sequence, 227 residues long: Small ribosomal subunit protein uS3 (227 aa).

A KH type-2 domain is found at 39–108 (IRKFIEERYK…EVIVNVDEVK (70 aa)).

Belongs to the universal ribosomal protein uS3 family. As to quaternary structure, part of the 30S ribosomal subunit. Forms a tight complex with proteins S10 and S14.

In terms of biological role, binds the lower part of the 30S subunit head. Binds mRNA in the 70S ribosome, positioning it for translation. The chain is Small ribosomal subunit protein uS3 from Sulfurihydrogenibium sp. (strain YO3AOP1).